We begin with the raw amino-acid sequence, 210 residues long: Na(+)-translocating NADH-quinone reductase subunit D (210 aa).

Transmembrane regions (helical) follow at residues 42–62, 72–92, 103–123, 131–151, and 178–198; these read FVMT…ISLI, IIAQ…VLKA, VFVG…AYAM, FLDG…VATV, and NGLL…IWGV.

This sequence belongs to the NqrDE/RnfAE family. In terms of assembly, composed of six subunits; NqrA, NqrB, NqrC, NqrD, NqrE and NqrF.

It localises to the cell inner membrane. The enzyme catalyses a ubiquinone + n Na(+)(in) + NADH + H(+) = a ubiquinol + n Na(+)(out) + NAD(+). Functionally, NQR complex catalyzes the reduction of ubiquinone-1 to ubiquinol by two successive reactions, coupled with the transport of Na(+) ions from the cytoplasm to the periplasm. NqrA to NqrE are probably involved in the second step, the conversion of ubisemiquinone to ubiquinol. This Aeromonas salmonicida (strain A449) protein is Na(+)-translocating NADH-quinone reductase subunit D.